We begin with the raw amino-acid sequence, 2403 residues long: Highly reducing polyketide synthase fogA (2403 aa).

The Ketosynthase family 3 (KS3) domain occupies 3–428 (DDPPCIVGMA…GANAHVILES (426 aa)). Residues Cys176, His311, and His350 each act as for beta-ketoacyl synthase activity in the active site. The tract at residues 538-858 (VFTGQGAQYA…PYAPSLVRKE (321 aa)) is malonyl-CoA:ACP transacylase (MAT) domain. Ser632 functions as the For malonyltransferase activity in the catalytic mechanism. Positions 929–1068 (HELLGTFALT…GSIRVVEPLT (140 aa)) are N-terminal hotdog fold. The tract at residues 929-1238 (HELLGTFALT…DARMSLYTGK (310 aa)) is dehydratase (DH) domain. The 313-residue stretch at 929 to 1241 (HELLGTFALT…MSLYTGKSSA (313 aa)) folds into the PKS/mFAS DH domain. The Proton acceptor; for dehydratase activity role is filled by His961. The segment at 1084 to 1241 (SFEASPTNRW…MSLYTGKSSA (158 aa)) is C-terminal hotdog fold. Residue Asp1152 is the Proton donor; for dehydratase activity of the active site. An enoyl reductase (ER) domain region spans residues 1663–1981 (GATDSMFFQQ…QQDRIGKIVI (319 aa)). A ketoreductase (KR) domain region spans residues 2006-2185 (VYLLIGCLGG…AVAVGLGMIS (180 aa)). Residues 2280–2300 (AQNSTSSSGSNSNTPTTAAPW) form a disordered region. The span at 2282 to 2296 (NSTSSSGSNSNTPTT) shows a compositional bias: low complexity. Positions 2320–2398 (SLNAAILRLI…GLAVVVEGKL (79 aa)) constitute a Carrier domain. An O-(pantetheine 4'-phosphoryl)serine modification is found at Ser2357.

It depends on pantetheine 4'-phosphate as a cofactor.

It participates in secondary metabolite biosynthesis. Functionally, highly reducing polyketide synthase; part of the gene cluster that mediates the biosynthesis of flavoglaucin and congeners (including aspergin, dihydroauroglaucin and auroglaucin), prenylated salicylaldehyde derivatives carrying a saturated or an unsaturated C-7 side chain. FogA releases the carboxylic acid (8E,10E,12E)-3,5,7-trihydroxytetradeca-8,10,12-trienoic acid as its product, as well as derivatives with one and two double bonds. FogA is indeed able to reduce the initial triketide, thus being at least partially responsible for the differently saturated heptyl side chains of flavoglaucin congeners. The oxidoreductases fogB, fogC and fogD modify the nascent polyketide in fogA-bound form and, together, fogA, fogB, fogC and fogD are necessary for the formation of the aromatic core and the cyclized PKS products are released as salicyl alcohols. In particular, fogB is responsible for oxidation of a hydroxyl group or reduction of remaining double bond(s) at the C-7 residue whereas fogD is probably involved in the reductive release of the modified PKS products. The cytochrome P450 monooxygenase fogE is then responsible for the hydroxylation at C-3 of the benzene ring. The fogE products are substrates of the prenyltransferase fogH and the prenylated benzyl alcohols are subsequently oxidized by the fogF to produce the final aryl aldehydes flavoglaucin and congeners. The short-chain dehydrogenase fogG does not seem to be involved in the biosynthesis of the prenylated salicylaldehyde derivatives. This chain is Highly reducing polyketide synthase fogA, found in Aspergillus ruber (strain CBS 135680).